The primary structure comprises 149 residues: uncharacterized protein (149 aa).

This is an uncharacterized protein from Acanthamoeba polyphaga (Amoeba).